Consider the following 160-residue polypeptide: Ribosomal RNA large subunit methyltransferase H (160 aa).

S-adenosyl-L-methionine-binding positions include Leu76, Gly108, and 127 to 132 (LGKMTW).

This sequence belongs to the RNA methyltransferase RlmH family. As to quaternary structure, homodimer.

It localises to the cytoplasm. The catalysed reaction is pseudouridine(1915) in 23S rRNA + S-adenosyl-L-methionine = N(3)-methylpseudouridine(1915) in 23S rRNA + S-adenosyl-L-homocysteine + H(+). Specifically methylates the pseudouridine at position 1915 (m3Psi1915) in 23S rRNA. This chain is Ribosomal RNA large subunit methyltransferase H, found in Sinorhizobium medicae (strain WSM419) (Ensifer medicae).